The following is a 134-amino-acid chain: Large ribosomal subunit protein bL17 (134 aa).

The protein belongs to the bacterial ribosomal protein bL17 family. In terms of assembly, part of the 50S ribosomal subunit. Contacts protein L32.

The protein is Large ribosomal subunit protein bL17 of Anaplasma marginale (strain Florida).